Reading from the N-terminus, the 310-residue chain is MFNHVTVLLKETVDGLDIKPDGTYVDCTLGGGGHSSYLLSQLTEGGRLIAFDQDEIAIQNAKEKFSSYGEQFITVKSNFRYLSEKLQELGITEVDGILFDLGVSSPQLDTPERGFSYHHDAPLDMRMDQDASLTAYDVVNSWSYEQLVRIFFQYGEEKFSKQIARKIEAYRENKAIETTGELVELIKEGIPAPARRTGGHPAKRVFQAIRIAVNDELKVFEEALESAIEMVKPGGRVSVITFHSLEDRICKTTFKRNSTTPQLPPGLPIIPDEFKPKLKLITRKPILPSDIELEENNRARSAKLRIAEKR.

S-adenosyl-L-methionine contacts are provided by residues 32 to 34 (GGH), aspartate 52, phenylalanine 79, aspartate 100, and glutamine 107.

The protein belongs to the methyltransferase superfamily. RsmH family.

It is found in the cytoplasm. It catalyses the reaction cytidine(1402) in 16S rRNA + S-adenosyl-L-methionine = N(4)-methylcytidine(1402) in 16S rRNA + S-adenosyl-L-homocysteine + H(+). In terms of biological role, specifically methylates the N4 position of cytidine in position 1402 (C1402) of 16S rRNA. In Bacillus thuringiensis subsp. konkukian (strain 97-27), this protein is Ribosomal RNA small subunit methyltransferase H.